Consider the following 512-residue polypeptide: NAD(P)H-quinone oxidoreductase subunit 2, organellar chromatophore (512 aa).

Helical transmembrane passes span 6–26 (LLAL…LLAL), 43–63 (WVPP…ASQW), 80–100 (LAIA…MISW), 107–127 (GAPM…AMFL), 133–153 (LVSI…LAGY), 168–188 (LLVG…LYGL), 210–230 (AALA…AVPF), 242–262 (PTPI…ALAL), 276–296 (WKFL…IVAL), 304–324 (MLAY…VCGT), 332–352 (ILYL…VILF), 376–396 (IGLS…GFFG), 411–431 (LLVV…ISVI), and 464–484 (VALL…NPLF).

This sequence belongs to the complex I subunit 2 family. NDH-1 can be composed of about 15 different subunits; different subcomplexes with different compositions have been identified which probably have different functions.

The protein resides in the plastid. Its subcellular location is the organellar chromatophore thylakoid membrane. It catalyses the reaction a plastoquinone + NADH + (n+1) H(+)(in) = a plastoquinol + NAD(+) + n H(+)(out). The enzyme catalyses a plastoquinone + NADPH + (n+1) H(+)(in) = a plastoquinol + NADP(+) + n H(+)(out). In terms of biological role, NDH-1 shuttles electrons from an unknown electron donor, via FMN and iron-sulfur (Fe-S) centers, to quinones in the respiratory and/or the photosynthetic chain. The immediate electron acceptor for the enzyme in this species is believed to be plastoquinone. Couples the redox reaction to proton translocation, and thus conserves the redox energy in a proton gradient. Cyanobacterial NDH-1 also plays a role in inorganic carbon-concentration. In Paulinella chromatophora, this protein is NAD(P)H-quinone oxidoreductase subunit 2, organellar chromatophore.